The primary structure comprises 94 residues: DNA-directed RNA polymerase subunit Rpo11 (94 aa).

It belongs to the archaeal Rpo11/eukaryotic RPB11/RPC19 RNA polymerase subunit family. As to quaternary structure, part of the RNA polymerase complex.

It is found in the cytoplasm. The enzyme catalyses RNA(n) + a ribonucleoside 5'-triphosphate = RNA(n+1) + diphosphate. Its function is as follows. DNA-dependent RNA polymerase (RNAP) catalyzes the transcription of DNA into RNA using the four ribonucleoside triphosphates as substrates. This Natronomonas pharaonis (strain ATCC 35678 / DSM 2160 / CIP 103997 / JCM 8858 / NBRC 14720 / NCIMB 2260 / Gabara) (Halobacterium pharaonis) protein is DNA-directed RNA polymerase subunit Rpo11.